We begin with the raw amino-acid sequence, 245 residues long: OCIA domain-containing protein 1 (245 aa).

In terms of domain architecture, OCIA spans 1 to 112 (MNGRADFREP…KKLENSPLGE (112 aa)). Phosphoserine occurs at positions 108, 116, 123, and 191. 2 disordered regions span residues 111 to 141 (GEAL…VSGQ) and 169 to 245 (NESA…TWDE). 2 stretches are compositionally biased toward basic and acidic residues: residues 190–210 (ESPK…RESY) and 224–238 (PMHE…KVNK).

The protein belongs to the OCIAD1 family. In terms of assembly, interacts with OCIAD2. Interacts with STAT3. As to expression, isoform 1 is highly expressed in many tissues, including testis, brain, placenta, ovary, prostate and mammary gland. Isoform 2 expression is restricted to the central nervous system including brain, cerebellum and spinal cord.

It localises to the endosome. Its function is as follows. Maintains stem cell potency. Increases STAT3 phosphorylation and controls ERK phosphorylation. May act as a scaffold, increasing STAT3 recruitment onto endosomes. Involved in integrin-mediated cancer cell adhesion and colony formation in ovarian cancer. The polypeptide is OCIA domain-containing protein 1 (Homo sapiens (Human)).